The following is a 246-amino-acid chain: Bis(5'-nucleosyl)-tetraphosphatase PrpE [asymmetrical] (246 aa).

Belongs to the PrpE family. The cofactor is Ni(2+).

The enzyme catalyses P(1),P(4)-bis(5'-guanosyl) tetraphosphate + H2O = GMP + GTP + 2 H(+). In terms of biological role, asymmetrically hydrolyzes Ap4p to yield AMP and ATP. This Halalkalibacterium halodurans (strain ATCC BAA-125 / DSM 18197 / FERM 7344 / JCM 9153 / C-125) (Bacillus halodurans) protein is Bis(5'-nucleosyl)-tetraphosphatase PrpE [asymmetrical].